The primary structure comprises 484 residues: Zinc metalloproteinase-disintegrin jerdonitin (484 aa).

Residues 1-20 form the signal peptide; it reads MIQVLLVTICLAVFPYQGSS. Positions 21–191 are excised as a propeptide; sequence IILESGNIDD…KLSQIMIPPE (171 aa). Q192 carries the pyrrolidone carboxylic acid modification. The region spanning 194-392 is the Peptidase M12B domain; it reads RYIELVIVAD…FTSRCLYNEP (199 aa). The Ca(2+) site is built by E197 and D281. 3 cysteine pairs are disulfide-bonded: C305-C387, C345-C369, and C347-C352. Residue H330 coordinates Zn(2+). E331 is a catalytic residue. Positions 334 and 340 each coordinate Zn(2+). Ca(2+) is bound by residues C387, N390, V402, N405, E409, E412, and D415. The 85-residue stretch at 400 to 484 folds into the Disintegrin domain; that stretch reads PSVCGNYYME…AGCPRNPFHA (85 aa). 7 cysteine pairs are disulfide-bonded: C403–C422, C414–C432, C416–C427, C426–C449, C440–C446, C445–C470, and C458–C477. Positions 462 to 464 match the Cell attachment site motif; it reads RGD.

The protein belongs to the venom metalloproteinase (M12B) family. P-II subfamily. P-IIb sub-subfamily. As to quaternary structure, monomer. The cofactor is Zn(2+). The N-terminus is blocked. In terms of tissue distribution, expressed by the venom gland.

The protein resides in the secreted. Its activity is regulated as follows. Fibrinogenolytic activity is completely inhibited by EDTA, but not by PMSF. Snake venom zinc metalloproteinase that inhibits ADP-induced human platelet aggregation (IC(50)=120 nM (native) and IC(50)=248 nM (recombinant)). May act by binding to the receptor GPIIb/GPIIIa (ITGA2B/ITGB3) on the platelet surface. Degrades the alpha-chain of fibrinogen completely and the beta-chain partially, leaving the gamma chain intact. Also inhibits the growth of several cell lines, including human liver cancer cells (Bel7402), human leukemia cells (K562) and human gastric carcinoma cells (BGC823). The sequence is that of Zinc metalloproteinase-disintegrin jerdonitin from Protobothrops jerdonii (Jerdon's pitviper).